The following is an 863-amino-acid chain: Oleate activated transcription factor 3 (863 aa).

A DNA-binding region (zn(2)-C6 fungal-type) is located at residues 18 to 47; it reads VCTNCKKRKSKCDRTKPCGTCVRLGDVDSC. Polar residues predominate over residues 52-63; sequence DSSGQPESSPSL. The interval 52 to 99 is disordered; it reads DSSGQPESSPSLNDADPLRKQSTPAERISPGFIKKRRSSQTRQDEDHW.

This sequence belongs to the OAF3 family.

Its subcellular location is the cytoplasm. It localises to the nucleus. It is found in the mitochondrion. In terms of biological role, transcriptional inhibitor with a significantly increased number of target genes in response to oleate. The chain is Oleate activated transcription factor 3 (OAF3) from Saccharomyces cerevisiae (strain ATCC 204508 / S288c) (Baker's yeast).